A 148-amino-acid polypeptide reads, in one-letter code: Large ribosomal subunit protein bL9 (148 aa).

The protein belongs to the bacterial ribosomal protein bL9 family.

In terms of biological role, binds to the 23S rRNA. This chain is Large ribosomal subunit protein bL9, found in Salinispora arenicola (strain CNS-205).